Reading from the N-terminus, the 153-residue chain is Endoribonuclease YbeY (153 aa).

The Zn(2+) site is built by His-118, His-122, and His-128.

Belongs to the endoribonuclease YbeY family. Requires Zn(2+) as cofactor.

The protein resides in the cytoplasm. In terms of biological role, single strand-specific metallo-endoribonuclease involved in late-stage 70S ribosome quality control and in maturation of the 3' terminus of the 16S rRNA. This chain is Endoribonuclease YbeY, found in Staphylococcus carnosus (strain TM300).